The following is a 132-amino-acid chain: Auxin-responsive protein SAUR72 (132 aa).

The interval 22-54 (SDSQRPSRRSESFLRSSVTRRSKKQTSSVPEGH) is disordered. Basic and acidic residues predominate over residues 23 to 33 (DSQRPSRRSES).

This sequence belongs to the ARG7 family. Interacts with and inhibits PP2C-D subfamily of type 2C phosphatases such as PP2C67/PP2C-D1. As to expression, highly expressed in the steles of roots and hypocotyls.

The protein resides in the cytoplasm. Functionally, provide a mechanistic link between auxin and plasma membrane H(+)-ATPases (PM H(+)-ATPases, e.g. AHA1 and AHA2), and triggers PM H(+)-ATPases activity by promoting phosphorylation of their C-terminal autoinhibitory domain as a result of PP2C-D subfamily of type 2C phosphatases inhibition, thus leading to the acidification of the apoplast and the facilitation of solutes and water uptake to drive cell expansion. Plays a role in the regulation of cell expansion, root meristem patterning and auxin transport. In Arabidopsis thaliana (Mouse-ear cress), this protein is Auxin-responsive protein SAUR72.